Reading from the N-terminus, the 443-residue chain is Thymidine phosphorylase (443 aa).

The protein belongs to the thymidine/pyrimidine-nucleoside phosphorylase family. As to quaternary structure, homodimer.

The catalysed reaction is thymidine + phosphate = 2-deoxy-alpha-D-ribose 1-phosphate + thymine. It participates in pyrimidine metabolism; dTMP biosynthesis via salvage pathway; dTMP from thymine: step 1/2. Functionally, the enzymes which catalyze the reversible phosphorolysis of pyrimidine nucleosides are involved in the degradation of these compounds and in their utilization as carbon and energy sources, or in the rescue of pyrimidine bases for nucleotide synthesis. The protein is Thymidine phosphorylase of Shewanella putrefaciens (strain CN-32 / ATCC BAA-453).